The sequence spans 486 residues: 3-sulfolactaldehyde dehydrogenase (486 aa).

Residues 157–158 (WN), 181–184 (RPAS), and 234–235 (GS) each bind NADP(+). Glu-256 functions as the Proton acceptor in the catalytic mechanism. Residue Leu-257 participates in NADP(+) binding. Cys-290 acts as the Nucleophile in catalysis. Glu-387 contributes to the NADP(+) binding site.

This sequence belongs to the aldehyde dehydrogenase family.

The catalysed reaction is (2S)-3-sulfolactaldehyde + NADP(+) + H2O = (2S)-3-sulfolactate + NADPH + 2 H(+). It carries out the reaction (2S)-3-sulfolactaldehyde + NAD(+) + H2O = (2S)-3-sulfolactate + NADH + 2 H(+). In terms of biological role, catalyzes the oxidation of (2S)-3-sulfolactaldehyde to (2S)-3-sulfolactate, using both NAD(+) and NADP(+) as electron acceptors. Is involved in a degradation pathway of sulfoquinovose (SQ) that allows P.putida SQ1 to use SQ as the sole carbon and energy source for growth. This is 3-sulfolactaldehyde dehydrogenase from Pseudomonas putida (Arthrobacter siderocapsulatus).